Consider the following 82-residue polypeptide: Omega-conotoxin-like TxO6 (82 aa).

The signal sequence occupies residues 1–22; sequence MKLTCVVIVAVLFLTAWTLVMA. A propeptide spanning residues 23 to 50 is cleaved from the precursor; the sequence is DDSNNGLANLFSKSRDEMEDPEAAKLEK. Intrachain disulfides connect C53-C71, C60-C76, and C70-C81.

Belongs to the conotoxin O1 superfamily. Expressed by the venom duct.

It is found in the secreted. In terms of biological role, omega-conotoxins act at presynaptic membranes, they bind and block voltage-gated calcium channels (Cav). This Conus textile (Cloth-of-gold cone) protein is Omega-conotoxin-like TxO6.